Consider the following 32-residue polypeptide: Cytochrome b6-f complex subunit 7 (32 aa).

Residues 5-25 (FIASASISFIITLIGLTLGFA) form a helical membrane-spanning segment.

The protein belongs to the PetM family. As to quaternary structure, the 4 large subunits of the cytochrome b6-f complex are cytochrome b6, subunit IV (17 kDa polypeptide, PetD), cytochrome f and the Rieske protein, while the 4 small subunits are PetG, PetL, PetM and PetN. The complex functions as a dimer.

It is found in the plastid. Its subcellular location is the chloroplast thylakoid membrane. Its function is as follows. Component of the cytochrome b6-f complex, which mediates electron transfer between photosystem II (PSII) and photosystem I (PSI), cyclic electron flow around PSI, and state transitions. The chain is Cytochrome b6-f complex subunit 7 from Guillardia theta (Cryptophyte).